The sequence spans 416 residues: Ferrochelatase, mitochondrial (416 aa).

The transit peptide at 1–47 (MAAALRSAGVLLRDRLLYGGSRACQPRRCQSGAATAAAATETAQRAR) directs the protein to the mitochondrion. The tract at residues 41–62 (ETAQRARSPKPQAQPGNRKPRT) is disordered. K50 bears the N6-acetyllysine mark. Residues R108, Y116, and S123 each coordinate protoporphyrin IX. K131 is modified (N6-succinyllysine). A [2Fe-2S] cluster-binding site is contributed by C189. The active site involves H223. K283 bears the N6-acetyllysine; alternate mark. K283 carries the post-translational modification N6-succinyllysine; alternate. D376 is an active-site residue. Positions 396, 399, and 404 each coordinate [2Fe-2S] cluster. The residue at position 408 (K408) is an N6-acetyllysine; alternate. K408 carries the N6-succinyllysine; alternate modification.

This sequence belongs to the ferrochelatase family. In terms of assembly, homodimer. Homotetramer. Interaction with PGRMC1; the interaction results in decreased FECH activity. Interacts with ABCB10 and SLC25A37; this interaction forms an oligomeric complex. Forms a complex with ABCB7 and ABCB10, where a dimeric FECH bridges ABCB7 and ABCB10 homodimers; this complex may be required for cellular iron homeostasis, mitochondrial function and heme biosynthesis. Interacts with ABCB7 and ABCB10. [2Fe-2S] cluster serves as cofactor.

The protein localises to the mitochondrion inner membrane. The enzyme catalyses heme b + 2 H(+) = protoporphyrin IX + Fe(2+). Its pathway is porphyrin-containing compound metabolism; protoheme biosynthesis; protoheme from protoporphyrin-IX: step 1/1. In terms of biological role, catalyzes the ferrous insertion into protoporphyrin IX and participates in the terminal step in the heme biosynthetic pathway. The protein is Ferrochelatase, mitochondrial of Bos taurus (Bovine).